The sequence spans 89 residues: Small ribosomal subunit protein uS15 (89 aa).

The protein belongs to the universal ribosomal protein uS15 family. As to quaternary structure, part of the 30S ribosomal subunit. Forms a bridge to the 50S subunit in the 70S ribosome, contacting the 23S rRNA.

One of the primary rRNA binding proteins, it binds directly to 16S rRNA where it helps nucleate assembly of the platform of the 30S subunit by binding and bridging several RNA helices of the 16S rRNA. In terms of biological role, forms an intersubunit bridge (bridge B4) with the 23S rRNA of the 50S subunit in the ribosome. The sequence is that of Small ribosomal subunit protein uS15 from Kocuria rhizophila (strain ATCC 9341 / DSM 348 / NBRC 103217 / DC2201).